The sequence spans 370 residues: L-selectin (370 aa).

Residues 1–28 (MLCPWKCQNAQRGLWNVFKLWVWIMLCC) form the signal peptide. Positions 29 to 38 (DFFAHHGTDC) are excised as a propeptide. At 39–333 (WTYHYSKRPM…SINEESDYNP (295 aa)) the chain is on the extracellular side. A C-type lectin domain is found at 55–155 (AFCRENYTDL…ACHKAKTALC (101 aa)). Intrachain disulfides connect cysteine 57–cysteine 155, cysteine 128–cysteine 147, cysteine 128–cysteine 160, cysteine 160–cysteine 171, cysteine 165–cysteine 180, cysteine 182–cysteine 191, cysteine 197–cysteine 241, cysteine 227–cysteine 254, cysteine 259–cysteine 303, and cysteine 289–cysteine 316. N-linked (GlcNAc...) asparagine glycans are attached at residues asparagine 60, asparagine 77, and asparagine 104. 5 residues coordinate Ca(2+): glutamate 118, asparagine 120, glutamate 126, asparagine 143, and aspartate 144. The EGF-like domain occupies 156-192 (YTASCKPWSCSGHGQCVEVINNYTCNCDLGYYGPECQ). A glycan (N-linked (GlcNAc...) asparagine) is linked at asparagine 177. 2 Sushi domains span residues 195-256 (TQCV…TCRV) and 257-318 (IQCE…RCQK). 3 N-linked (GlcNAc...) asparagine glycosylation sites follow: asparagine 216, asparagine 226, and asparagine 246. N-linked (GlcNAc...) asparagine glycosylation is found at asparagine 308 and asparagine 320. A helical transmembrane segment spans residues 334–354 (LFIPVAVMVTAFSGLAFIIWL). The Cytoplasmic portion of the chain corresponds to 355–370 (ARRLKRKSKKVSEKHG).

It belongs to the selectin/LECAM family. In terms of assembly, interaction with SELPLG/PSGL1 and PODXL2 is required for promoting recruitment and rolling of leukocytes. This interaction is dependent on the sialyl Lewis X glycan modification of SELPLG and PODXL2, and tyrosine sulfation modifications of SELPLG. Sulfation on 'Tyr-51' of SELPLG is important for L-selectin binding. N-glycosylated. Highly expressed in lymphocytes from peripheral lymph nodes. Low in lymphocytes isolated from Peyer patches.

It localises to the cell membrane. Functionally, calcium-dependent lectin that mediates cell adhesion by binding to glycoproteins on neighboring cells. Mediates the adherence of lymphocytes to endothelial cells of high endothelial venules in peripheral lymph nodes. Promotes initial tethering and rolling of leukocytes in endothelia. This chain is L-selectin (SELL), found in Bos taurus (Bovine).